The sequence spans 226 residues: 2-C-methyl-D-erythritol 4-phosphate cytidylyltransferase (226 aa).

Belongs to the IspD/TarI cytidylyltransferase family. IspD subfamily.

The catalysed reaction is 2-C-methyl-D-erythritol 4-phosphate + CTP + H(+) = 4-CDP-2-C-methyl-D-erythritol + diphosphate. It functions in the pathway isoprenoid biosynthesis; isopentenyl diphosphate biosynthesis via DXP pathway; isopentenyl diphosphate from 1-deoxy-D-xylulose 5-phosphate: step 2/6. In terms of biological role, catalyzes the formation of 4-diphosphocytidyl-2-C-methyl-D-erythritol from CTP and 2-C-methyl-D-erythritol 4-phosphate (MEP). This chain is 2-C-methyl-D-erythritol 4-phosphate cytidylyltransferase, found in Actinobacillus pleuropneumoniae serotype 7 (strain AP76).